The chain runs to 100 residues: Elevenin-Vc1 (100 aa).

The signal sequence occupies residues 1–24 (MAPSQKALLVLVLSMLLTASDSWA). Cysteine 29 and cysteine 38 form a disulfide bridge. The propeptide occupies 44-100 (KRGGDSLSVGGSAELDDALTDPFLRSEEPREWRELTRLSRVLQTFLSHPTGETEQHD).

It belongs to the elevenin family. Monomer. In terms of tissue distribution, expressed by the venom duct.

Its subcellular location is the secreted. Its function is as follows. May mimic the function of prey elevenin neuropeptide. In vivo, intracranial injection in mice induces hyperactivity (tested at 5 and 10 nM). The protein is Elevenin-Vc1 of Conus victoriae (Queen Victoria cone).